The following is a 628-amino-acid chain: tRNA 5-methylaminomethyl-2-thiouridine biosynthesis bifunctional protein MnmC (628 aa).

The tRNA (mnm(5)s(2)U34)-methyltransferase stretch occupies residues 1-237 (MSSYSPLVPP…KWHMTVGVRE (237 aa)). Residues 265-628 (VGGGLAGAGI…ADLLAAVAPR (364 aa)) are FAD-dependent cmnm(5)s(2)U34 oxidoreductase.

This sequence in the N-terminal section; belongs to the methyltransferase superfamily. tRNA (mnm(5)s(2)U34)-methyltransferase family. The protein in the C-terminal section; belongs to the DAO family. The cofactor is FAD.

The protein localises to the cytoplasm. It catalyses the reaction 5-aminomethyl-2-thiouridine(34) in tRNA + S-adenosyl-L-methionine = 5-methylaminomethyl-2-thiouridine(34) in tRNA + S-adenosyl-L-homocysteine + H(+). Functionally, catalyzes the last two steps in the biosynthesis of 5-methylaminomethyl-2-thiouridine (mnm(5)s(2)U) at the wobble position (U34) in tRNA. Catalyzes the FAD-dependent demodification of cmnm(5)s(2)U34 to nm(5)s(2)U34, followed by the transfer of a methyl group from S-adenosyl-L-methionine to nm(5)s(2)U34, to form mnm(5)s(2)U34. The polypeptide is tRNA 5-methylaminomethyl-2-thiouridine biosynthesis bifunctional protein MnmC (Bordetella petrii (strain ATCC BAA-461 / DSM 12804 / CCUG 43448)).